A 445-amino-acid chain; its full sequence is Exodeoxyribonuclease 7 large subunit (445 aa).

This sequence belongs to the XseA family. Heterooligomer composed of large and small subunits.

It localises to the cytoplasm. It carries out the reaction Exonucleolytic cleavage in either 5'- to 3'- or 3'- to 5'-direction to yield nucleoside 5'-phosphates.. Its function is as follows. Bidirectionally degrades single-stranded DNA into large acid-insoluble oligonucleotides, which are then degraded further into small acid-soluble oligonucleotides. The chain is Exodeoxyribonuclease 7 large subunit from Nautilia profundicola (strain ATCC BAA-1463 / DSM 18972 / AmH).